The following is a 246-amino-acid chain: UPF0736 protein Aflv_2136 (246 aa).

This sequence belongs to the UPF0736 family.

This chain is UPF0736 protein Aflv_2136, found in Anoxybacillus flavithermus (strain DSM 21510 / WK1).